Here is a 1049-residue protein sequence, read N- to C-terminus: MLKPQPPQQTSQPQQPPPTQQAVARRSPGGTSPPNGGLPGPLTATAAPPGPPAAVSPCLGPAAAAGSGLRRGAESILAASAPPQHQERPGAVAIGSVRGQTTGKGPPQSPVFEGVYNNSRMLHFLTAVVGSTCDVKVKNGTTYEGIFKTLSSKFELAVDAVHRKASEPAGGPRREDIVDTMVFKPSDVLLVHFRNVDFNYATKDKFTDSAIAMNSKVNGEHKEKVLQRWEGGDSNSDDYDLESDMSNGWDPNEMFKFNEENYGVKTTYDSSLSSYTVPLEKDNSEEFRQRELRAAQLAREIESSPQYRLRIAMENDDGRTEEEKHSAVQRQGSGRESPSLVSREGKYIPLPQRVREGPRGGVRCSSSRGGRPGLSSLPPRGPHHLDNSSPGPGSEARGINGGPSRMSPKAQRPLRGAKTLSSPSNRPSGEASVPPTSAALPFLPVGRMYPPRSPKSAAPAPVSASCPEPPIGSAVASSASIPVTSSVVDPGAGSISPASPKLSLTPTDVKELPTKEPSRNLEAQELARIAGKVPGLQNEQKRFQLEELRKFGAQFKLQPSSSPETGLDPFPSRILKEEAKGKEKEVDGLLTSDPMGSPVSSKTESILDKEDKVPMAGVGGTEGPEQLPAPCPSQTGSPPVGLIKGDEKEEGPVTEQVKKSTLNPNAKEFNPTKPLLSVNKSTSTPTSPGPRTHSTPSIPVLTAGQSGLYSPQYISYIPQIHMGPAVQAPQMYPYPVSNSVPGQQGKYRGAKGSLPPQRSDQHQPASAPPMMQAAAAAAGPPLVAATPYSSYIPYNPQQFPGQPAMMQPMAHYPSQPVFAPMLQSNPRMLTSGSHPQAIVSSSTPQYPAAEQPTPQALYATVHQSYPHHATQLHGHQPQPATTPTGSQPQSQHAAPSPVQHQAGQAPHLGSGQPQQNLYHPGALTGTPPSLPPGPSAQSPQSSFPQPAAVYAIHPHQQLPHGFTNMAHVTQAHVQTGVTAAPPPHPGAPHPPQVMLLHPPQGHGGPPQGAVPPSGVPALSASTPSPYPYIGHPQVQSHPSQQLPFHPPGN.

At methionine 1 the chain carries N-acetylmethionine. Positions 1-54 (MLKPQPPQQTSQPQQPPPTQQAVARRSPGGTSPPNGGLPGPLTATAAPPGPPAA) are disordered. Position 27 is a phosphoserine (serine 27). Threonine 45 is subject to Phosphothreonine. Residues 96–119 (SVRGQTTGKGPPQSPVFEGVYNNS) form an interaction with MPL region. Serine 109 is modified (phosphoserine). Tyrosine 116 is subject to Phosphotyrosine. In terms of domain architecture, Sm spans 120-197 (RMLHFLTAVV…VLLVHFRNVD (78 aa)). Lysine 205 is subject to N6-acetyllysine. Serine 236 is subject to Phosphoserine. Residue tyrosine 262 is modified to Phosphotyrosine. Serine 304 bears the Phosphoserine mark. At tyrosine 307 the chain carries Phosphotyrosine. Over residues 314–326 (ENDDGRTEEEKHS) the composition is skewed to basic and acidic residues. 7 disordered regions span residues 314-522 (ENDD…RNLE), 554-573 (QFKL…FPSR), 578-704 (EAKG…LTAG), 736-772 (VSNS…PMMQ), 824-852 (SNPR…AEQP), 868-944 (HATQ…SSFP), and 999-1049 (PQGH…PPGN). The segment covering 328-340 (VQRQGSGRESPSL) has biased composition (polar residues). Serine 333 and serine 337 each carry phosphoserine. Residue lysine 346 forms a Glycyl lysine isopeptide (Lys-Gly) (interchain with G-Cter in SUMO2) linkage. Tyrosine 347 carries the phosphotyrosine modification. Asymmetric dimethylarginine is present on arginine 359. Residues 361–378 (GVRCSSSRGGRPGLSSLP) show a composition bias toward low complexity. Phosphoserine is present on residues serine 389, serine 407, and serine 453. Residues 454-466 (PKSAAPAPVSASC) show a composition bias toward low complexity. Residues 475 to 487 (VASSASIPVTSSV) are compositionally biased toward polar residues. 2 positions are modified to phosphoserine: serine 496 and serine 499. Basic and acidic residues predominate over residues 508-519 (DVKELPTKEPSR). Phosphoserine is present on residues serine 560, serine 561, and serine 562. A compositionally biased stretch (basic and acidic residues) spans 578–587 (EAKGKEKEVD). Position 597 is a phosphoserine (serine 597). Residue threonine 635 is modified to Phosphothreonine. 4 positions are modified to phosphoserine: serine 637, serine 677, serine 683, and serine 687. Residues 681-697 (STSTPTSPGPRTHSTPS) are compositionally biased toward low complexity. Polar residues-rich tracts occupy residues 824 to 845 (SNPR…STPQ) and 878 to 902 (QPAT…QHQA). The span at 935 to 944 (SAQSPQSSFP) shows a compositional bias: low complexity. The span at 1033-1042 (QVQSHPSQQL) shows a compositional bias: polar residues.

Belongs to the ataxin-2 family. In terms of assembly, interacts with MPL/TPOR and EPOR and dissociates after ligand stimulation. Interacts with DDX6, G3BP, and ATXN2. Interacts with PRMT1. Interacts with CIC and ATXN1. In terms of processing, thrombopoietin triggers the phosphorylation on tyrosine residues in a way that is dependent on MPL C-terminal domain. Post-translationally, asymmetrically dimethylated. Probably methylated by PRMT1. As to expression, expressed in cerebellum.

The protein resides in the membrane. It is found in the cytoplasm. The protein localises to the nucleus speckle. Its subcellular location is the cytoplasmic granule. In terms of biological role, involved in the regulation of stress granule and P-body formation. The chain is Ataxin-2-like protein (Atxn2l) from Mus musculus (Mouse).